The sequence spans 435 residues: MSHVHQAGEAFASSPAESRQEIRNYTMNFGPQHPAAHGVLRLILEMDGETIMRADPHVGLLHRGTEKLAESKPFNQSIGYMDRLDYVSMMCNEHAYVRSIETLMGIEAPERAQYIRTLFDEITRILNHLMWLGSNALDLGAMAVMLYAFREREELMDCYEAVSGARMHAAYYRPGGVYRDLPDHMPKYKESRWHKGKALKNLNAAREGSLLDFLENFTNEFPGRVDEYETLLTDNRIWKQRTVGIGVVTPELAHQWGMTGVMLRGSGIAWDLRKKRPYAKYDAVDFDIPLGKEGDCYDRYLVRIAEMRESNRIIKQCVAWLKANPGPVMVKNFKVAPPKREDMKDDMEALIHHFKLFSEGYCVPAGETYAAVEAPKGEFGCYLVSDGANKPFRVHLRAPGFAHLSSIDSIVRGHMLADVVAMIGTYDLVFGEVDR.

Belongs to the complex I 49 kDa subunit family. NDH-1 is composed of 14 different subunits. Subunits NuoB, C, D, E, F, and G constitute the peripheral sector of the complex.

It is found in the cell inner membrane. It catalyses the reaction a quinone + NADH + 5 H(+)(in) = a quinol + NAD(+) + 4 H(+)(out). Functionally, NDH-1 shuttles electrons from NADH, via FMN and iron-sulfur (Fe-S) centers, to quinones in the respiratory chain. The immediate electron acceptor for the enzyme in this species is believed to be ubiquinone. Couples the redox reaction to proton translocation (for every two electrons transferred, four hydrogen ions are translocated across the cytoplasmic membrane), and thus conserves the redox energy in a proton gradient. The chain is NADH-quinone oxidoreductase subunit D 2 from Stenotrophomonas maltophilia (strain R551-3).